Reading from the N-terminus, the 728-residue chain is E3 ubiquitin-protein ligase LNX (728 aa).

The RING-type zinc-finger motif lies at 45-83; the sequence is CHICLQALLDPLDTPCGHTYCTLCLTNFLVEKDFCPVDR. Positions 185-188 match the NPXY motif motif; that stretch reads NPAY. Residues 185 to 220 are disordered; the sequence is NPAYVSSVEDGEPVANSSDSGRSNRTRARPFERSTM. The tract at residues 186–244 is interaction with MAGEB18; the sequence is PAYVSSVEDGEPVANSSDSGRSNRTRARPFERSTMRSRSFKKINRALSALRRTKSGSVV. PDZ domains are found at residues 278-362 and 385-467; these read SIKI…VLRE and HVIL…VSRQ. Residue S445 is modified to Phosphoserine. Residues 481–500 are disordered; it reads WISNGQQSPGPGERNTASKP. PDZ domains follow at residues 508–593 and 638–723; these read VVSV…ALEV and DVIL…IASW.

Interacts with CXADR. Interacts with MAGEB18 and MAGEF1. Interacts with the phosphotyrosine interaction domain of all isoforms of NUMB. IGSF5/JAM4 interacts with isoform 2 through the second PDZ domain, other isoforms may also interact with IGSF5/JAM4. As to expression, isoform 1 and isoform 2 are expressed in the heart. Isoform 1 is also expressed in kidney, lung and skeletal muscle while isoform 2 is also expressed in brain.

It localises to the cytoplasm. It carries out the reaction S-ubiquitinyl-[E2 ubiquitin-conjugating enzyme]-L-cysteine + [acceptor protein]-L-lysine = [E2 ubiquitin-conjugating enzyme]-L-cysteine + N(6)-ubiquitinyl-[acceptor protein]-L-lysine.. It functions in the pathway protein modification; protein ubiquitination. In terms of biological role, E3 ubiquitin-protein ligase that mediates ubiquitination and subsequent proteasomal degradation of NUMB. E3 ubiquitin ligases accept ubiquitin from an E2 ubiquitin-conjugating enzyme in the form of a thioester and then directly transfers the ubiquitin to targeted substrates. Mediates ubiquitination of isoform p66 and isoform p72 of NUMB, but not that of isoform p71 or isoform p65. Isoform 2 provides an endocytic scaffold for IGSF5/JAM4. The chain is E3 ubiquitin-protein ligase LNX (Lnx1) from Mus musculus (Mouse).